The following is a 189-amino-acid chain: Protein GrpE (189 aa).

Basic and acidic residues predominate over residues 1-14; sequence MTEKNEEVVEDKNI. The segment at 1 to 38 is disordered; sequence MTEKNEEVVEDKNISDQTDENLTEEIESEADDLQVEPD. A compositionally biased stretch (acidic residues) spans 17 to 35; the sequence is QTDENLTEEIESEADDLQV.

The protein belongs to the GrpE family. Homodimer.

It localises to the cytoplasm. Functionally, participates actively in the response to hyperosmotic and heat shock by preventing the aggregation of stress-denatured proteins, in association with DnaK and GrpE. It is the nucleotide exchange factor for DnaK and may function as a thermosensor. Unfolded proteins bind initially to DnaJ; upon interaction with the DnaJ-bound protein, DnaK hydrolyzes its bound ATP, resulting in the formation of a stable complex. GrpE releases ADP from DnaK; ATP binding to DnaK triggers the release of the substrate protein, thus completing the reaction cycle. Several rounds of ATP-dependent interactions between DnaJ, DnaK and GrpE are required for fully efficient folding. This is Protein GrpE from Leuconostoc mesenteroides subsp. mesenteroides (strain ATCC 8293 / DSM 20343 / BCRC 11652 / CCM 1803 / JCM 6124 / NCDO 523 / NBRC 100496 / NCIMB 8023 / NCTC 12954 / NRRL B-1118 / 37Y).